A 306-amino-acid polypeptide reads, in one-letter code: Tyrosine recombinase XerC (306 aa).

Residues 10–94 (ARCHSYLQQF…AVKQWGEFLL (85 aa)) form the Core-binding (CB) domain. Residues 115-294 (PLPKNIDVDS…DFQHLAKVYD (180 aa)) enclose the Tyr recombinase domain. Catalysis depends on residues Arg154, Lys178, His246, Arg249, and His272. Tyr281 (O-(3'-phospho-DNA)-tyrosine intermediate) is an active-site residue.

This sequence belongs to the 'phage' integrase family. XerC subfamily. In terms of assembly, forms a cyclic heterotetrameric complex composed of two molecules of XerC and two molecules of XerD.

It is found in the cytoplasm. Functionally, site-specific tyrosine recombinase, which acts by catalyzing the cutting and rejoining of the recombining DNA molecules. The XerC-XerD complex is essential to convert dimers of the bacterial chromosome into monomers to permit their segregation at cell division. It also contributes to the segregational stability of plasmids. This Shewanella oneidensis (strain ATCC 700550 / JCM 31522 / CIP 106686 / LMG 19005 / NCIMB 14063 / MR-1) protein is Tyrosine recombinase XerC.